The following is a 237-amino-acid chain: Histone H1E (237 aa).

Low complexity predominate over residues 1–21 (MSDPAQEVEAPVEAAPVASSP). Disordered stretches follow at residues 1-56 (MSDP…PVSE) and 109-237 (LQAK…KKAK). Over residues 26 to 42 (EKAPKAPKAEKPKSDKP) the composition is skewed to basic and acidic residues. Positions 50–124 (THPPVSEMVV…GASGSFKLPP (75 aa)) constitute an H15 domain. The segment covering 182–195 (AKPAAKKAAAPKPK) has biased composition (low complexity). Over residues 200–209 (PKKEVKPKKE) the composition is skewed to basic and acidic residues. Positions 210-237 (AKPKKAAAKPAKKPAAKPAKKPAAKKAK) are enriched in basic residues.

The protein belongs to the histone H1/H5 family.

It localises to the nucleus. It is found in the chromosome. In terms of biological role, histones H1 are necessary for the condensation of nucleosome chains into higher-order structures. The sequence is that of Histone H1E from Chironomus tentans (Midge).